Consider the following 571-residue polypeptide: NADH-quinone oxidoreductase subunit C/D (571 aa).

Residues 1–171 are NADH dehydrogenase I subunit C; it reads MQASEKTLNE…NLSNTMNYRR (171 aa). Residues 194 to 571 are NADH dehydrogenase I subunit D; it reads AQVVLNWGPL…LDPVVGEVDR (378 aa).

It in the N-terminal section; belongs to the complex I 30 kDa subunit family. This sequence in the C-terminal section; belongs to the complex I 49 kDa subunit family. As to quaternary structure, NDH-1 is composed of 13 different subunits. Subunits NuoB, CD, E, F, and G constitute the peripheral sector of the complex.

It is found in the cell inner membrane. The enzyme catalyses a quinone + NADH + 5 H(+)(in) = a quinol + NAD(+) + 4 H(+)(out). Functionally, NDH-1 shuttles electrons from NADH, via FMN and iron-sulfur (Fe-S) centers, to quinones in the respiratory chain. The immediate electron acceptor for the enzyme in this species is believed to be ubiquinone. Couples the redox reaction to proton translocation (for every two electrons transferred, four hydrogen ions are translocated across the cytoplasmic membrane), and thus conserves the redox energy in a proton gradient. This Hydrogenobaculum sp. (strain Y04AAS1) protein is NADH-quinone oxidoreductase subunit C/D (nuoC).